Here is a 610-residue protein sequence, read N- to C-terminus: Menin (610 aa).

Residues 214–390 (GVAERSWLYL…SLLEAGEERP (177 aa)) form an interaction with FANCD2 region. The tract at residues 460 to 552 (REAEAAEAEE…SPPPEGPVLT (93 aa)) is disordered. The span at 484–500 (RRESKPEEPPPPKKPAL) shows a compositional bias: basic and acidic residues. 2 positions are modified to phosphoserine: S487 and S543. At T594 the chain carries Phosphothreonine.

In terms of assembly, component of the MLL-HCF complex, at least composed of KMT2A/MLL1, MEN1, ASH2L, RBBP5, DPY30, WDR5, HCFC1 and HCFC2. Component of the menin-associated histone methyltransferase complex, at least composed of KMT2B/MLL4, MEN1, ASH2L, RBBP5, DPY30 and WDR5. Interacts with POLR2B. Interacts with POLR2A phosphorylated at 'Ser-5', but not with the unphosphorylated, nor 'Ser-2' phosphorylated POLR2A forms. Interacts with FANCD2 and DBF4. Interacts with SMAD3, but not with SMAD2, nor SMAD4. Directly interacts with NFKB1, NFKB2 and RELA. Interacts with JUND (via MBM motif); inhibits the interaction of JUND with MAPK10 and the phosphorylation of JUND by MAP kinases MAPK8 and MAPK10. Interacts with KMT2A (via MBM motif). The KMT2A-MEN1 complex interacts with PSIP1 with a greater affinity as MEN1 enhances interaction of KMT2A with PSIP1. In terms of tissue distribution, widely expressed, including in the pituitary, brain, large intestine, spleen, kidney, adrenal gland, ovary, testis, thymus, lung, epididymis, bone marrow, pancreatic islets and placenta.

The protein localises to the nucleus. Functionally, essential component of a MLL/SET1 histone methyltransferase (HMT) complex, a complex that specifically methylates 'Lys-4' of histone H3 (H3K4). Functions as a transcriptional regulator. Binds to the TERT promoter and represses telomerase expression. Represses JUND-mediated transcriptional activation on AP1 sites, as well as that mediated by NFKB subunit RELA. Positively regulates HOXC8 and HOXC6 gene expression. May be involved in normal hematopoiesis through the activation of HOXA9 expression. May be involved in DNA repair. Plays a role in TGFB1-mediated inhibition of cell-proliferation, possibly regulating SMAD3 transcriptional activity. The chain is Menin (Men1) from Rattus norvegicus (Rat).